The primary structure comprises 226 residues: RNA annealing protein YRA1 (226 aa).

The interval 1–62 (MSANLDKSLD…PIRKNTRAPP (62 aa)) is disordered. Residue S2 is modified to N-acetylserine. 2 positions are modified to phosphoserine: S8 and S100. Positions 78–158 (VKVNVEGLPR…SRLRLNLIVD (81 aa)) constitute an RRM domain. The tract at residues 173-226 (AMPQKGGNAPRPVKRGPNRKAAMAKSQNKPKREKPAKKSLEDLDKEMADYFEKK) is disordered. The span at 208 to 226 (AKKSLEDLDKEMADYFEKK) shows a compositional bias: basic and acidic residues.

Component of the transcription/export (TREX) complex, which is at least is formed of SUB2, TEX1 and YRA1 and the THO complex composed of HPR1, MFT1, THO2 and THP1. Interacts with RDS3 and YRA2.

Its subcellular location is the nucleus. Its function is as follows. RNA-binding RNA annealing protein. May have a role in pre-mRNA metabolism. Component the TREX complex, which operates in coupling transcription elongation to mRNA export. The protein is RNA annealing protein YRA1 (YRA1) of Saccharomyces cerevisiae (strain ATCC 204508 / S288c) (Baker's yeast).